The primary structure comprises 230 residues: Aspartate and serine-rich protein (230 aa).

N-linked (GlcNAc...) asparagine glycosylation is found at asparagine 17, asparagine 132, and asparagine 139. A disordered region spans residues 112–230 (LNGGATAGGV…DSDSNDTDSD (119 aa)). A compositionally biased stretch (acidic residues) spans 126–140 (DTDESSNDTDEDSND). The span at 141 to 161 (SDSKDTDSDSKDTDSDSKDSD) shows a compositional bias: basic and acidic residues. Residues asparagine 163 and asparagine 170 are each glycosylated (N-linked (GlcNAc...) asparagine). Residues 173–223 (DSKDTDSDSKDSDSKDTDSDSKDTDSDSKDSDSKDTDSDSKDTDSDSKDSD) are compositionally biased toward basic and acidic residues. Asparagine 225 carries an N-linked (GlcNAc...) asparagine glycan.

Component of the acid-insoluble organic matrix of calcified layers of the shell (at protein level).

The protein localises to the secreted. This chain is Aspartate and serine-rich protein, found in Lottia gigantea (Giant owl limpet).